The primary structure comprises 682 residues: Potassium-transporting ATPase ATP-binding subunit (682 aa).

Helical transmembrane passes span 15 to 35 (AALF…AKLA), 42 to 62 (SPVM…TASG), 66 to 86 (AGFG…GNFA), 233 to 253 (LTFL…GVTL), and 257 to 277 (LLIA…LPAI). The active-site 4-aspartylphosphate intermediate is Asp310. Residues Asp347, Glu351, 377–384 (FTAQTRMS), and Lys395 each bind ATP. 2 residues coordinate Mg(2+): Asp518 and Asp522. 3 helical membrane passes run 588–608 (FAIL…LNVM), 616–636 (AVLA…PLAL), and 662–682 (VLLP…VLGA).

It belongs to the cation transport ATPase (P-type) (TC 3.A.3) family. Type IA subfamily. The system is composed of three essential subunits: KdpA, KdpB and KdpC.

The protein resides in the cell inner membrane. The catalysed reaction is K(+)(out) + ATP + H2O = K(+)(in) + ADP + phosphate + H(+). In terms of biological role, part of the high-affinity ATP-driven potassium transport (or Kdp) system, which catalyzes the hydrolysis of ATP coupled with the electrogenic transport of potassium into the cytoplasm. This subunit is responsible for energy coupling to the transport system and for the release of the potassium ions to the cytoplasm. The chain is Potassium-transporting ATPase ATP-binding subunit from Xanthomonas axonopodis pv. citri (strain 306).